The following is a 346-amino-acid chain: NADH-ubiquinone oxidoreductase chain 2 (346 aa).

11 helical membrane passes run 1 to 21, 25 to 45, 60 to 80, 95 to 115, 124 to 144, 149 to 169, 178 to 195, 200 to 219, 242 to 262, 274 to 294, and 326 to 346; these read MNPH…TITI, HWVL…PLIS, FLTQ…NAWA, CLLL…HFWF, LMTA…LLLM, LNPA…GWMG, ILAF…IILV, LALL…FMAL, ATLM…GFMP, EMTP…FFYL, and AILA…HAIV.

Belongs to the complex I subunit 2 family.

It is found in the mitochondrion inner membrane. It carries out the reaction a ubiquinone + NADH + 5 H(+)(in) = a ubiquinol + NAD(+) + 4 H(+)(out). Core subunit of the mitochondrial membrane respiratory chain NADH dehydrogenase (Complex I) that is believed to belong to the minimal assembly required for catalysis. Complex I functions in the transfer of electrons from NADH to the respiratory chain. The immediate electron acceptor for the enzyme is believed to be ubiquinone. The protein is NADH-ubiquinone oxidoreductase chain 2 (MT-ND2) of Mareca penelope (Eurasian wigeon).